The chain runs to 325 residues: Acetyl-coenzyme A carboxylase carboxyl transferase subunit alpha (325 aa).

In terms of domain architecture, CoA carboxyltransferase C-terminal spans arginine 38–serine 292.

This sequence belongs to the AccA family. As to quaternary structure, acetyl-CoA carboxylase is a heterohexamer composed of biotin carboxyl carrier protein (AccB), biotin carboxylase (AccC) and two subunits each of ACCase subunit alpha (AccA) and ACCase subunit beta (AccD).

Its subcellular location is the cytoplasm. The catalysed reaction is N(6)-carboxybiotinyl-L-lysyl-[protein] + acetyl-CoA = N(6)-biotinyl-L-lysyl-[protein] + malonyl-CoA. It functions in the pathway lipid metabolism; malonyl-CoA biosynthesis; malonyl-CoA from acetyl-CoA: step 1/1. In terms of biological role, component of the acetyl coenzyme A carboxylase (ACC) complex. First, biotin carboxylase catalyzes the carboxylation of biotin on its carrier protein (BCCP) and then the CO(2) group is transferred by the carboxyltransferase to acetyl-CoA to form malonyl-CoA. The protein is Acetyl-coenzyme A carboxylase carboxyl transferase subunit alpha of Bacillus velezensis (strain DSM 23117 / BGSC 10A6 / LMG 26770 / FZB42) (Bacillus amyloliquefaciens subsp. plantarum).